The chain runs to 645 residues: DNA mismatch repair protein MutL (645 aa).

The interval 371 to 403 (VHDQKDKNHDVESHKNNLDSTSSTNNESTEVSN) is disordered. Residues 372-387 (HDQKDKNHDVESHKNN) show a composition bias toward basic and acidic residues. Residues 390-402 (STSSTNNESTEVS) are compositionally biased toward low complexity.

Belongs to the DNA mismatch repair MutL/HexB family.

This protein is involved in the repair of mismatches in DNA. It is required for dam-dependent methyl-directed DNA mismatch repair. May act as a 'molecular matchmaker', a protein that promotes the formation of a stable complex between two or more DNA-binding proteins in an ATP-dependent manner without itself being part of a final effector complex. The chain is DNA mismatch repair protein MutL from Staphylococcus epidermidis (strain ATCC 35984 / DSM 28319 / BCRC 17069 / CCUG 31568 / BM 3577 / RP62A).